Here is a 339-residue protein sequence, read N- to C-terminus: Glycerol-3-phosphate dehydrogenase [NAD(P)+] (339 aa).

Positions 15, 16, 36, and 110 each coordinate NADPH. Sn-glycerol 3-phosphate is bound by residues Lys-110, Gly-139, and Thr-141. An NADPH-binding site is contributed by Ala-143. The sn-glycerol 3-phosphate site is built by Lys-195, Asp-248, Ser-258, Arg-259, and Asn-260. Lys-195 functions as the Proton acceptor in the catalytic mechanism. Arg-259 is a binding site for NADPH. NADPH is bound by residues Val-283 and Glu-285.

It belongs to the NAD-dependent glycerol-3-phosphate dehydrogenase family.

Its subcellular location is the cytoplasm. The catalysed reaction is sn-glycerol 3-phosphate + NAD(+) = dihydroxyacetone phosphate + NADH + H(+). It carries out the reaction sn-glycerol 3-phosphate + NADP(+) = dihydroxyacetone phosphate + NADPH + H(+). Its pathway is membrane lipid metabolism; glycerophospholipid metabolism. Catalyzes the reduction of the glycolytic intermediate dihydroxyacetone phosphate (DHAP) to sn-glycerol 3-phosphate (G3P), the key precursor for phospholipid synthesis. This chain is Glycerol-3-phosphate dehydrogenase [NAD(P)+], found in Escherichia coli O17:K52:H18 (strain UMN026 / ExPEC).